Reading from the N-terminus, the 226-residue chain is Phosphoribosylformylglycinamidine synthase subunit PurQ (226 aa).

The Glutamine amidotransferase type-1 domain occupies 2-226; sequence KIAVIVFPGS…LENGTVIAEG (225 aa). C86 functions as the Nucleophile in the catalytic mechanism. Catalysis depends on residues H195 and E197.

As to quaternary structure, part of the FGAM synthase complex composed of 1 PurL, 1 PurQ and 2 PurS subunits.

It is found in the cytoplasm. It catalyses the reaction N(2)-formyl-N(1)-(5-phospho-beta-D-ribosyl)glycinamide + L-glutamine + ATP + H2O = 2-formamido-N(1)-(5-O-phospho-beta-D-ribosyl)acetamidine + L-glutamate + ADP + phosphate + H(+). It carries out the reaction L-glutamine + H2O = L-glutamate + NH4(+). Its pathway is purine metabolism; IMP biosynthesis via de novo pathway; 5-amino-1-(5-phospho-D-ribosyl)imidazole from N(2)-formyl-N(1)-(5-phospho-D-ribosyl)glycinamide: step 1/2. Part of the phosphoribosylformylglycinamidine synthase complex involved in the purines biosynthetic pathway. Catalyzes the ATP-dependent conversion of formylglycinamide ribonucleotide (FGAR) and glutamine to yield formylglycinamidine ribonucleotide (FGAM) and glutamate. The FGAM synthase complex is composed of three subunits. PurQ produces an ammonia molecule by converting glutamine to glutamate. PurL transfers the ammonia molecule to FGAR to form FGAM in an ATP-dependent manner. PurS interacts with PurQ and PurL and is thought to assist in the transfer of the ammonia molecule from PurQ to PurL. This is Phosphoribosylformylglycinamidine synthase subunit PurQ from Limosilactobacillus fermentum (strain NBRC 3956 / LMG 18251) (Lactobacillus fermentum).